Here is a 424-residue protein sequence, read N- to C-terminus: Serine hydroxymethyltransferase 2 (424 aa).

(6S)-5,6,7,8-tetrahydrofolate contacts are provided by residues Leu125 and 129–131; that span reads GHL. An N6-(pyridoxal phosphate)lysine modification is found at Lys234. Glu250 contributes to the (6S)-5,6,7,8-tetrahydrofolate binding site.

This sequence belongs to the SHMT family. Homodimer. Requires pyridoxal 5'-phosphate as cofactor.

It is found in the cytoplasm. The enzyme catalyses (6R)-5,10-methylene-5,6,7,8-tetrahydrofolate + glycine + H2O = (6S)-5,6,7,8-tetrahydrofolate + L-serine. Its pathway is one-carbon metabolism; tetrahydrofolate interconversion. It functions in the pathway amino-acid biosynthesis; glycine biosynthesis; glycine from L-serine: step 1/1. In terms of biological role, catalyzes the reversible interconversion of serine and glycine with tetrahydrofolate (THF) serving as the one-carbon carrier. This reaction serves as the major source of one-carbon groups required for the biosynthesis of purines, thymidylate, methionine, and other important biomolecules. Also exhibits THF-independent aldolase activity toward beta-hydroxyamino acids, producing glycine and aldehydes, via a retro-aldol mechanism. This is Serine hydroxymethyltransferase 2 from Burkholderia mallei (strain ATCC 23344).